The sequence spans 1896 residues: Plexin-A1 (1896 aa).

The first 26 residues, 1 to 26 (MPLPPRSLQVLLLLLLLLLLLPGMWA), serve as a signal peptide directing secretion. One can recognise a Sema domain in the interval 27-512 (EAGLPRAGGG…TEKQVTRVPV (486 aa)). Over 27–1244 (EAGLPRAGGG…VYSDSLLTLP (1218 aa)) the chain is Extracellular. An N-linked (GlcNAc...) asparagine glycan is attached at Asn77. 10 disulfides stabilise this stretch: Cys95–Cys104, Cys130–Cys138, Cys286–Cys407, Cys302–Cys358, Cys376–Cys395, Cys515–Cys532, Cys521–Cys563, Cys524–Cys541, Cys535–Cys547, and Cys598–Cys617. N-linked (GlcNAc...) asparagine glycosylation is found at Asn660, Asn672, and Asn701. IPT/TIG domains are found at residues 864-959 (PKIL…FTFV), 961-1045 (PTFY…YNYT), 1048-1147 (PTIL…FLYY), and 1150-1236 (PVLE…LQVY). Residue Asn1043 is glycosylated (N-linked (GlcNAc...) asparagine). N-linked (GlcNAc...) asparagine glycans are attached at residues Asn1187 and Asn1212. The chain crosses the membrane as a helical span at residues 1245 to 1265 (AIVGIGGGGGLLLLVIVAVLI). Residues 1264 to 1317 (LIAYKRKSRDADRTLKRLQLQMDNLESRVALECKEAFAELQTDIHELTNDLDGA) adopt a coiled-coil conformation. Residues 1266–1896 (AYKRKSRDAD…QVVDTMALSS (631 aa)) lie on the Cytoplasmic side of the membrane.

The protein belongs to the plexin family. In terms of assembly, interacts directly with NRP1 and NRP2. Interacts with PLXN1B. Interacts with FARP2, RND1 and KDR/VEGFR2. Binding of SEMA3A leads to dissociation of FARP2. Interacts with CRMP1, DPYSL2/CRMP2, DPYSL3/CRMP3 and DPYSL4/CRMP4. Interacts (via TIG domains) with TREM2; the interaction mediates SEMA6D binding and signaling through TYROBP. In terms of tissue distribution, detected in fetal brain, lung, liver and kidney.

Its subcellular location is the cell membrane. Functionally, coreceptor for SEMA3A, SEMA3C, SEMA3F and SEMA6D. Necessary for signaling by class 3 semaphorins and subsequent remodeling of the cytoskeleton. Plays a role in axon guidance, invasive growth and cell migration. Class 3 semaphorins bind to a complex composed of a neuropilin and a plexin. The plexin modulates the affinity of the complex for specific semaphorins, and its cytoplasmic domain is required for the activation of down-stream signaling events in the cytoplasm. Acts as coreceptor of TREM2 for SEMA6D in dendritic cells and is involved in the generation of immune responses and skeletal homeostasis. The sequence is that of Plexin-A1 from Homo sapiens (Human).